The chain runs to 334 residues: Trans-3-hydroxy-L-proline dehydratase (334 aa).

The active-site Proton acceptor is the cysteine 91. Substrate contacts are provided by residues 92–93 (GH), aspartate 250, and 255–256 (GT).

This sequence belongs to the proline racemase family.

The catalysed reaction is trans-3-hydroxy-L-proline = 1-pyrroline-2-carboxylate + H2O. In terms of biological role, catalyzes the dehydration of trans-3-hydroxy-L-proline (t3LHyp) to Delta(1)-pyrroline-2-carboxylate (Pyr2C). Is likely involved in a degradation pathway that converts t3LHyp to L-proline. Can also catalyze the epimerization of trans-4-hydroxy-L-proline (t4LHyp) to cis-4-hydroxy-D-proline (c4DHyp) in vitro. Displays no proline racemase activity. The chain is Trans-3-hydroxy-L-proline dehydratase from Bacillus thuringiensis subsp. konkukian (strain 97-27).